A 74-amino-acid polypeptide reads, in one-letter code: uncharacterized protein (74 aa).

Residues 15–32 (FLHALTVTFLSDIFVWLV) traverse the membrane as a helical segment.

Its subcellular location is the membrane. This is an uncharacterized protein from Saccharomyces cerevisiae (strain ATCC 204508 / S288c) (Baker's yeast).